The chain runs to 352 residues: MQVGVFIPIGNNGWLISETSPQYMPSFELNKEITQKAETYGFDFALSMIKLRGFGGKTQFWEHNLESFTLMAGLAAVTSKIKIFATVATLTIPPAIVARMASTIDSIAPGRFGVNLVTGWQKAEYSQMGLWPGEAHYTDRYNYLAEYTTVLKDLLETGVSDFKGKYFTMDDCRVSPHPKETKLICAGSSDEGLAFTAQYADYSFALGKGTNTPTAFASVNKRLEAAAEKTGRDVQSFILFMIIADETDEKAMAKWQSYRDGADQEALAWLTQQAAPNAKAGATTNTQQLAAPESAVNLNMGTLVGSYESIAKMLDEIAAVPGTAGVLLVFDDFLRGVEDFGTRIQPLMKSRT.

FMN-binding positions include 49-50 (IK), Asn115, Glu124, 140-141 (RY), and Ser189.

The protein belongs to the NtaA/SnaA/DszA monooxygenase family. RutA subfamily.

It carries out the reaction uracil + FMNH2 + NADH + O2 = (Z)-3-ureidoacrylate + FMN + NAD(+) + H2O + H(+). The enzyme catalyses thymine + FMNH2 + NADH + O2 = (Z)-2-methylureidoacrylate + FMN + NAD(+) + H2O + H(+). Its function is as follows. Catalyzes the pyrimidine ring opening between N-3 and C-4 by an unusual flavin hydroperoxide-catalyzed mechanism, adding oxygen atoms in the process to yield ureidoacrylate peracid, that immediately reacts with FMN forming ureidoacrylate and FMN-N(5)-oxide. The FMN-N(5)-oxide reacts spontaneously with NADH to produce FMN. Requires the flavin reductase RutF to regenerate FMN in vivo. This is Pyrimidine monooxygenase RutA from Caulobacter segnis (strain ATCC 21756 / DSM 7131 / JCM 7823 / NBRC 15250 / LMG 17158 / TK0059) (Mycoplana segnis).